Reading from the N-terminus, the 490-residue chain is Probable cytochrome P450 308a1 (490 aa).

Heme is bound at residue Cys431.

It belongs to the cytochrome P450 family. Heme is required as a cofactor.

Its subcellular location is the endoplasmic reticulum membrane. The protein resides in the microsome membrane. May be involved in the metabolism of insect hormones and in the breakdown of synthetic insecticides. The chain is Probable cytochrome P450 308a1 (Cyp308a1) from Drosophila melanogaster (Fruit fly).